The primary structure comprises 507 residues: Serine hydroxymethyltransferase (507 aa).

N6-(pyridoxal phosphate)lysine is present on Lys283.

This sequence belongs to the SHMT family. In terms of assembly, homotetramer. It depends on pyridoxal 5'-phosphate as a cofactor.

It catalyses the reaction (6R)-5,10-methylene-5,6,7,8-tetrahydrofolate + glycine + H2O = (6S)-5,6,7,8-tetrahydrofolate + L-serine. It functions in the pathway one-carbon metabolism; tetrahydrofolate interconversion. Functionally, interconversion of serine and glycine. This chain is Serine hydroxymethyltransferase (mel-32), found in Caenorhabditis elegans.